A 197-amino-acid chain; its full sequence is Ribonuclease HII (197 aa).

The 187-residue stretch at 11-197 (NLIAGVDEVG…FAPVRKILGL (187 aa)) folds into the RNase H type-2 domain. A divalent metal cation is bound by residues aspartate 17, glutamate 18, and aspartate 109.

This sequence belongs to the RNase HII family. The cofactor is Mn(2+). Mg(2+) serves as cofactor.

The protein localises to the cytoplasm. It catalyses the reaction Endonucleolytic cleavage to 5'-phosphomonoester.. Endonuclease that specifically degrades the RNA of RNA-DNA hybrids. This is Ribonuclease HII from Haemophilus ducreyi (strain 35000HP / ATCC 700724).